Consider the following 465-residue polypeptide: Clusterin-like protein 1 (465 aa).

The N-terminal stretch at 1 to 20 (MKPPILVFIVYLLQLRDCQC) is a signal peptide. A coiled-coil region spans residues 62–107 (LMERREEEHSKLMRTLKKCREEKQEALKLMNEVQEHLEEEERLCQV). Disulfide bonds link Cys-105-Cys-333, Cys-116-Cys-325, Cys-119-Cys-322, Cys-124-Cys-315, and Cys-131-Cys-305. 2 N-linked (GlcNAc...) asparagine glycosylation sites follow: Asn-196 and Asn-257. The disordered stretch occupies residues 280 to 300 (LSKQDKDSAHGGPSSTTWPVR). N-linked (GlcNAc...) asparagine glycosylation is found at Asn-311, Asn-351, Asn-412, and Asn-430.

This sequence belongs to the clusterin family.

It localises to the secreted. The protein is Clusterin-like protein 1 of Bos taurus (Bovine).